The chain runs to 179 residues: MSRIGKVPIPIPDKVNVTIKGQAVTVKGPKGELSREITPEVAIEQADNLVTVTRRNESRIARQRHGLSRTLIANMVEGVSKGFEKKLQIQGVGYRAQVQGRNLILNVGYSNPVTIEPPEGVQVAVESNTNVIVSGINKEVVGNTAARIRAVRPPEPYKGKGIRYADEYVRRKVGKAGKK.

This sequence belongs to the universal ribosomal protein uL6 family. In terms of assembly, part of the 50S ribosomal subunit.

Its function is as follows. This protein binds to the 23S rRNA, and is important in its secondary structure. It is located near the subunit interface in the base of the L7/L12 stalk, and near the tRNA binding site of the peptidyltransferase center. The sequence is that of Large ribosomal subunit protein uL6 from Acaryochloris marina (strain MBIC 11017).